The following is a 629-amino-acid chain: Phosphomethylpyrimidine synthase (629 aa).

The segment covering methionine 1–aspartate 13 has biased composition (polar residues). Positions methionine 1–valine 22 are disordered. Residues asparagine 233, methionine 262, tyrosine 291, histidine 327, serine 347 to glycine 349, aspartate 388 to arginine 391, and glutamate 427 contribute to the substrate site. Histidine 431 serves as a coordination point for Zn(2+). Tyrosine 454 lines the substrate pocket. A Zn(2+)-binding site is contributed by histidine 495. Cysteine 575, cysteine 578, and cysteine 583 together coordinate [4Fe-4S] cluster.

It belongs to the ThiC family. As to quaternary structure, homodimer. [4Fe-4S] cluster serves as cofactor.

The enzyme catalyses 5-amino-1-(5-phospho-beta-D-ribosyl)imidazole + S-adenosyl-L-methionine = 4-amino-2-methyl-5-(phosphooxymethyl)pyrimidine + CO + 5'-deoxyadenosine + formate + L-methionine + 3 H(+). It functions in the pathway cofactor biosynthesis; thiamine diphosphate biosynthesis. Its function is as follows. Catalyzes the synthesis of the hydroxymethylpyrimidine phosphate (HMP-P) moiety of thiamine from aminoimidazole ribotide (AIR) in a radical S-adenosyl-L-methionine (SAM)-dependent reaction. The chain is Phosphomethylpyrimidine synthase from Pseudomonas fluorescens (strain Pf0-1).